Reading from the N-terminus, the 253-residue chain is Giant extracellular hemoglobin linker 1 chain (253 aa).

The region spanning 89–131 (HHCDDDHLSCKDVAFTCIGHNLVCDGHKDCLNGHDEDEETCSI) is the LDL-receptor class A domain. Cystine bridges form between C91-C105, C98-C118, and C112-C129.

In terms of assembly, disulfide-linked dimer of identical chains. A model is proposed for the subunit structure of the Tylorrhynchus hemoglobin, consisting of 216 polypeptide chains, 192 heme-containing chains, and 24 linker chains.

Acts as a linker for the assembly of heme-containing chains in the construction of giant hemoglobin. The protein is Giant extracellular hemoglobin linker 1 chain of Tylorrhynchus heterochetus (Japanese palolo worm).